Reading from the N-terminus, the 685-residue chain is Diphthine--ammonia ligase (685 aa).

This sequence in the C-terminal section; belongs to the RutC family. It in the N-terminal section; belongs to the Diphthine--ammonia ligase family. Interacts with elongation factor 2 (eEF-2; EFT1 or EFT2).

It is found in the cytoplasm. It catalyses the reaction diphthine-[translation elongation factor 2] + NH4(+) + ATP = diphthamide-[translation elongation factor 2] + AMP + diphosphate + H(+). The protein operates within protein modification; peptidyl-diphthamide biosynthesis. Its function is as follows. Amidase that catalyzes the last step of diphthamide biosynthesis using ammonium and ATP. Diphthamide biosynthesis consists in the conversion of an L-histidine residue in the translation elongation factor eEF-2 (EFT1 or EFT2) to diphthamide. This is Diphthine--ammonia ligase (DPH6) from Saccharomyces cerevisiae (strain ATCC 204508 / S288c) (Baker's yeast).